The chain runs to 437 residues: Ribulose bisphosphate carboxylase-like protein (437 aa).

The active-site Proton acceptor is Lys176. The Mg(2+) site is built by Lys202, Asp204, and Glu205. Lys202 is modified (N6-carboxylysine). His293 acts as the Proton acceptor in catalysis.

It belongs to the RuBisCO large chain family. Type IV subfamily. In terms of assembly, homodimer. Requires Mg(2+) as cofactor.

Its function is as follows. May be involved in sulfur metabolism and oxidative stress response. Does not show RuBisCO activity. This Archaeoglobus fulgidus (strain ATCC 49558 / DSM 4304 / JCM 9628 / NBRC 100126 / VC-16) protein is Ribulose bisphosphate carboxylase-like protein.